Reading from the N-terminus, the 222-residue chain is Deoxyribose-phosphate aldolase (222 aa).

The active-site Proton donor/acceptor is the D90. K152 functions as the Schiff-base intermediate with acetaldehyde in the catalytic mechanism. K181 serves as the catalytic Proton donor/acceptor.

The protein belongs to the DeoC/FbaB aldolase family. DeoC type 1 subfamily.

The protein localises to the cytoplasm. It carries out the reaction 2-deoxy-D-ribose 5-phosphate = D-glyceraldehyde 3-phosphate + acetaldehyde. It functions in the pathway carbohydrate degradation; 2-deoxy-D-ribose 1-phosphate degradation; D-glyceraldehyde 3-phosphate and acetaldehyde from 2-deoxy-alpha-D-ribose 1-phosphate: step 2/2. Catalyzes a reversible aldol reaction between acetaldehyde and D-glyceraldehyde 3-phosphate to generate 2-deoxy-D-ribose 5-phosphate. The protein is Deoxyribose-phosphate aldolase of Pectobacterium atrosepticum (strain SCRI 1043 / ATCC BAA-672) (Erwinia carotovora subsp. atroseptica).